We begin with the raw amino-acid sequence, 201 residues long: Ribonuclease HII (201 aa).

Positions 11–201 (LRECGCDEAG…VVDADRPTTE (191 aa)) constitute an RNase H type-2 domain. Residues Asp17, Glu18, and Asp109 each coordinate a divalent metal cation.

The protein belongs to the RNase HII family. The cofactor is Mn(2+). Requires Mg(2+) as cofactor.

It localises to the cytoplasm. It catalyses the reaction Endonucleolytic cleavage to 5'-phosphomonoester.. Functionally, endonuclease that specifically degrades the RNA of RNA-DNA hybrids. This chain is Ribonuclease HII (rnhB), found in Porphyromonas gingivalis (strain ATCC BAA-308 / W83).